Here is a 485-residue protein sequence, read N- to C-terminus: BTB/POZ domain-containing protein YLR108C (485 aa).

In terms of domain architecture, BTB spans 26-121 (EVFKIRIGQK…LIKEYDYHFT (96 aa)).

The protein localises to the nucleus. The polypeptide is BTB/POZ domain-containing protein YLR108C (Saccharomyces cerevisiae (strain ATCC 204508 / S288c) (Baker's yeast)).